Consider the following 887-residue polypeptide: DNA mismatch repair protein MutS (887 aa).

621–628 is an ATP binding site; it reads GPNMGGKS. Positions 828 to 853 are disordered; it reads AEPEPNKPAAAAKTKPASPQPDLFAS. The segment covering 834-848 has biased composition (low complexity); that stretch reads KPAAAAKTKPASPQP.

This sequence belongs to the DNA mismatch repair MutS family.

Functionally, this protein is involved in the repair of mismatches in DNA. It is possible that it carries out the mismatch recognition step. This protein has a weak ATPase activity. The sequence is that of DNA mismatch repair protein MutS from Saccharophagus degradans (strain 2-40 / ATCC 43961 / DSM 17024).